A 272-amino-acid polypeptide reads, in one-letter code: Cholesterol 25-hydroxylase (272 aa).

A glycan (N-linked (GlcNAc...) asparagine) is linked at Asn-5. The next 3 membrane-spanning stretches (helical) occupy residues 38 to 58 (FFPV…FVVL), 84 to 104 (LLPC…PVTL), and 121 to 141 (LLLL…EFFV). Residues 129–263 (LFCLLLFDME…FTHWDKILGT (135 aa)) form the Fatty acid hydroxylase domain. The short motif at 142-146 (WHLLH) is the Histidine box-1 element. Positions 157–161 (HKVHH) match the Histidine box-2 motif. N-linked (GlcNAc...) asparagine glycans are attached at residues Asn-163 and Asn-189. Positions 238–244 (HHDLHHS) match the Histidine box-3 motif.

The protein belongs to the sterol desaturase family. Fe cation is required as a cofactor. N-glycosylated.

The protein localises to the endoplasmic reticulum membrane. It carries out the reaction cholesterol + AH2 + O2 = 25-hydroxycholesterol + A + H2O. The enzyme catalyses cholesterol + NADPH + O2 + H(+) = 25-hydroxycholesterol + NADP(+) + H2O. Functionally, catalyzes the formation of 25-hydroxycholesterol from cholesterol, leading to repress cholesterol biosynthetic enzymes. Plays a key role in cell positioning and movement in lymphoid tissues: 25-hydroxycholesterol is an intermediate in biosynthesis of 7-alpha,25-dihydroxycholesterol (7-alpha,25-OHC), an oxysterol that acts as a ligand for the G protein-coupled receptor GPR183/EBI2, a chemotactic receptor for a number of lymphoid cells. May play an important role in regulating lipid metabolism by synthesizing a corepressor that blocks sterol regulatory element binding protein (SREBP) processing. As an interferon-stimulated gene, has broad antiviral activities against a wide range of enveloped viruses, such as vesicular stomatitis virus (VSV) and SARS coronavirus-2 (SARS-CoV-2). Its product, 25-hydroxycholesterol, activates the ER-localized enzyme ACAT to induce internalization of accessible cholesterol on the plasma membrane and restricts SARS-CoV-2 S protein-mediated fusion which inhibits virus replication. In testis, production of 25-hydroxycholesterol by macrophages plays a role in Leydig cell differentiation. Required to restrain inflammation in macrophages: production of 25-hydroxycholesterol protects macrophages from cholesterol overload, thereby preventing mitochondrial DNA release and subsequent activation of the AIM2 inflammasome. In Homo sapiens (Human), this protein is Cholesterol 25-hydroxylase.